A 365-amino-acid polypeptide reads, in one-letter code: MKLSDFDFDLPSELIAQYPSRERDNSDLLIAVTPPIKTKFYNIIDYLKEGDLLVFNNSKVIKAKLNLGENITINLNQKLSDDSWSAFAKPARKLHVNDEFYFDNHKVIITEKLAMGEIKVKFELNDISVFEFLNKYGEMPLPVYIRRSHSLCHPVATTTGSKTYLNNDWIPWSNHGMTNTQNDNDRYQTVYSQIEGSVAAPTAGLHFTKDILDKLKAEGIQATFLTLHVGAGTFLPVKTENIHEHKMHTEYCSITPDTAKIINKAKQEGKRIIAVGTTTLRTLESSCNNGIVKAGSFKTDIFITPGFKFQTADMLLTNFHFPKSTLFMLICAFAGFKEMHELYKYAIKEAMRFFSYGDATLLCRK.

Belongs to the QueA family. As to quaternary structure, monomer.

Its subcellular location is the cytoplasm. The catalysed reaction is 7-aminomethyl-7-carbaguanosine(34) in tRNA + S-adenosyl-L-methionine = epoxyqueuosine(34) in tRNA + adenine + L-methionine + 2 H(+). The protein operates within tRNA modification; tRNA-queuosine biosynthesis. Functionally, transfers and isomerizes the ribose moiety from AdoMet to the 7-aminomethyl group of 7-deazaguanine (preQ1-tRNA) to give epoxyqueuosine (oQ-tRNA). In Rickettsia africae (strain ESF-5), this protein is S-adenosylmethionine:tRNA ribosyltransferase-isomerase.